Here is a 70-residue protein sequence, read N- to C-terminus: Small ribosomal subunit protein bS21B (70 aa).

The protein belongs to the bacterial ribosomal protein bS21 family.

This Rhizobium etli (strain ATCC 51251 / DSM 11541 / JCM 21823 / NBRC 15573 / CFN 42) protein is Small ribosomal subunit protein bS21B.